The chain runs to 98 residues: Large ribosomal subunit protein uL23 (98 aa).

This sequence belongs to the universal ribosomal protein uL23 family. As to quaternary structure, part of the 50S ribosomal subunit. Contacts protein L29, and trigger factor when it is bound to the ribosome.

In terms of biological role, one of the early assembly proteins it binds 23S rRNA. One of the proteins that surrounds the polypeptide exit tunnel on the outside of the ribosome. Forms the main docking site for trigger factor binding to the ribosome. The polypeptide is Large ribosomal subunit protein uL23 (Ruegeria pomeroyi (strain ATCC 700808 / DSM 15171 / DSS-3) (Silicibacter pomeroyi)).